Here is a 658-residue protein sequence, read N- to C-terminus: PTS system 2-O-alpha-mannosyl-D-glycerate-specific EIIABC component (658 aa).

At 1 to 313 the chain is on the periplasmic side; that stretch reads MVLFYRAHWR…TELKQALLSG (313 aa). Positions 25–171 constitute a PTS EIIA type-2 domain; that stretch reads TLTHRDALCL…DELLSALDDK (147 aa). Histidine 87 serves as the catalytic Tele-phosphohistidine intermediate; for EIIA activity. Histidine 87 is subject to Phosphohistidine; by HPr. The PTS EIIB type-2 domain occupies 186 to 282; sequence IVCVTACPAG…AEALIQQALT (97 aa). Cysteine 192 functions as the Phosphocysteine intermediate; for EIIB activity in the catalytic mechanism. Phosphocysteine; by EIIA is present on cysteine 192. One can recognise a PTS EIIC type-2 domain in the interval 306 to 641; the sequence is LKQALLSGIS…AISTAILLMW (336 aa). Residues 314-334 traverse the membrane as a helical segment; sequence ISFAVPLIVAGGTVLAVAVLL. The Cytoplasmic segment spans residues 335-358; the sequence is SQIFGLQDLFNEENSWLWMYRKLG. A helical membrane pass occupies residues 359 to 379; sequence GGLLGILMVPVLAAYTAYSLA. The Periplasmic portion of the chain corresponds to 380–389; that stretch reads DKPALAPGFA. The helical transmembrane segment at 390–410 threads the bilayer; the sequence is AGLAANMIGSGFLGAVVGGLI. The Cytoplasmic segment spans residues 411–433; it reads AGYLMRWVKNHLRLSSKFNGFLT. The helical transmembrane segment at 434 to 454 threads the bilayer; sequence FYLYPVLGTLGAGSLMLFVVG. The Periplasmic segment spans residues 455 to 474; it reads EPVAWINNSLTAWLNGLSGS. The chain crosses the membrane as a helical span at residues 475–495; that stretch reads NALLLGAILGFMCSFDLGGPV. Residues 496–500 lie on the Cytoplasmic side of the membrane; that stretch reads NKAAY. The helical transmembrane segment at 501–521 threads the bilayer; that stretch reads AFCLGAMANGVYGPYAIFASV. Topologically, residues 522-551 are periplasmic; it reads KMVSAFTVTASTMLAPRLFKEFEIETGKST. The helical transmembrane segment at 552–572 threads the bilayer; sequence WLLGLAGITEGAIPMAIEDPL. Residue arginine 573 is a topological domain, cytoplasmic. A helical transmembrane segment spans residues 574-594; the sequence is VIGSFVLGSMVTGAIVGAMNI. The Periplasmic portion of the chain corresponds to 595 to 620; sequence GLSTPGAGIFSLFLLHDNGAGGVMAA. The chain crosses the membrane as a helical span at residues 621–641; sequence IGWFGAALVGAAISTAILLMW. The Cytoplasmic portion of the chain corresponds to 642 to 658; that stretch reads RRHAVKHGNYLTDGVMP.

It is found in the cell inner membrane. The catalysed reaction is (2R)-2-O-(alpha-D-mannosyl)-glycerate(out) + N(pros)-phospho-L-histidyl-[protein] = (2R)-2-O-(6-phospho-alpha-D-mannosyl)-glycerate(in) + L-histidyl-[protein]. Its function is as follows. The phosphoenolpyruvate-dependent sugar phosphotransferase system (sugar PTS), a major carbohydrate active transport system, catalyzes the phosphorylation of incoming sugar substrates concomitantly with their translocation across the cell membrane. This system is involved in mannosyl-D-glycerate transport. Also involved in thermoinduction of ompC. The protein is PTS system 2-O-alpha-mannosyl-D-glycerate-specific EIIABC component of Escherichia coli (strain K12).